A 684-amino-acid chain; its full sequence is Pseudohemocyanin-1 (684 aa).

An N-terminal signal peptide occupies residues 1 to 23; it reads SLVVAAAAASPYSGSHDFSGFQR. A disordered region spans residues 7–32; the sequence is AAASPYSGSHDFSGFQRDEPDGVPTA. N100, N193, N230, and N626 each carry an N-linked (GlcNAc...) asparagine glycan.

Belongs to the tyrosinase family. Hemocyanin subfamily. As to quaternary structure, hexamer. As to expression, strongly expressed in ovaries. Also expressed in heart. Not detected in hepatopancreas, gills, connective tissue or muscle.

Does not function as a hemocyanin. The chain is Pseudohemocyanin-1 from Homarus americanus (American lobster).